A 104-amino-acid chain; its full sequence is Protein S100-A14 (104 aa).

Residues 27-61 form the EF-hand domain; sequence KNFHQYSVEGGKETLTPSELRDLVTQQLPHLMPSN.

This sequence belongs to the S-100 family. Homodimer. Interacts with AGER. In terms of tissue distribution, expressed at highest levels in colon and at moderate levels in thymus, kidney, liver, small intestine, and lung. Low expression in heart and no expression is seen in brain, skeletal muscle, spleen, placenta and peripheral blood leukocytes.

The protein resides in the cytoplasm. Functionally, modulates P53/TP53 protein levels, and thereby plays a role in the regulation of cell survival and apoptosis. Depending on the context, it can promote cell proliferation or apoptosis. Plays a role in the regulation of cell migration by modulating the levels of MMP2, a matrix protease that is under transcriptional control of P53/TP53. Does not bind calcium. The chain is Protein S100-A14 (S100A14) from Homo sapiens (Human).